We begin with the raw amino-acid sequence, 265 residues long: 3-methyl-2-oxobutanoate hydroxymethyltransferase (265 aa).

Residues D44 and D83 each contribute to the Mg(2+) site. 3-methyl-2-oxobutanoate contacts are provided by residues 44–45 (DS), D83, and K113. E115 contributes to the Mg(2+) binding site. E182 (proton acceptor) is an active-site residue.

This sequence belongs to the PanB family. In terms of assembly, homodecamer; pentamer of dimers. The cofactor is Mg(2+).

It is found in the cytoplasm. The enzyme catalyses 3-methyl-2-oxobutanoate + (6R)-5,10-methylene-5,6,7,8-tetrahydrofolate + H2O = 2-dehydropantoate + (6S)-5,6,7,8-tetrahydrofolate. It functions in the pathway cofactor biosynthesis; (R)-pantothenate biosynthesis; (R)-pantoate from 3-methyl-2-oxobutanoate: step 1/2. Catalyzes the reversible reaction in which hydroxymethyl group from 5,10-methylenetetrahydrofolate is transferred onto alpha-ketoisovalerate to form ketopantoate. In Aquifex aeolicus (strain VF5), this protein is 3-methyl-2-oxobutanoate hydroxymethyltransferase.